The chain runs to 2579 residues: Ectopic P granules protein 5 homolog (2579 aa).

Disordered regions lie at residues 1 to 46 (MAEA…SREQ) and 92 to 132 (NEES…GTKV). The segment covering 7–23 (PQRRAKAKASRTKTKEK) has biased composition (basic residues). The segment covering 24-34 (KKYETPQREES) has biased composition (basic and acidic residues). Residue Thr134 is modified to Phosphothreonine. The segment at 535–564 (PSERKPSSSGPGSGTWTLVDEGGEEDEDPE) is disordered. Over residues 555–564 (EGGEEDEDPE) the composition is skewed to acidic residues. Residues 1607 to 1633 (MHKNEAISQQLHVLRKEVKQLQAEAAK) adopt a coiled-coil conformation.

This sequence belongs to the EPG5 family. Interacts with RAN.

It is found in the cytoplasm. Its subcellular location is the perinuclear region. It localises to the lysosome. In terms of biological role, involved in autophagy. May play a role in a late step of autophagy, such as clearance of autophagosomal cargo. Plays a key role in innate and adaptive immune response triggered by unmethylated cytidine-phosphate-guanosine (CpG) dinucleotides from pathogens, and mediated by the nucleotide-sensing receptor TLR9. It is necessary for the translocation of CpG dinucleotides from early endosomes to late endosomes and lysosomes, where TLR9 is located. The polypeptide is Ectopic P granules protein 5 homolog (EPG5) (Homo sapiens (Human)).